Consider the following 84-residue polypeptide: Cell division topological specificity factor (84 aa).

Belongs to the MinE family.

In terms of biological role, prevents the cell division inhibition by proteins MinC and MinD at internal division sites while permitting inhibition at polar sites. This ensures cell division at the proper site by restricting the formation of a division septum at the midpoint of the long axis of the cell. In Pseudomonas syringae pv. tomato (strain ATCC BAA-871 / DC3000), this protein is Cell division topological specificity factor.